An 89-amino-acid polypeptide reads, in one-letter code: Inner kinetochore subunit mhf2 (89 aa).

This sequence belongs to the CENP-X/MHF2 family. In terms of assembly, the MHF histone-fold complex is a heterotetramer of 2 mhf1-mhf2 heterodimers. Component of the inner kinetochore constitutive centromere-associated network (CCAN) (also known as central kinetochore Sim4 complex in fission yeast), which is composed of at least cnl2, cnp3, cnp20, fta1, fta2, fta3, fta4, fta6, fta7, mal2, mhf1, mhf2, mis6, mis15, mis17, sim4 and wip1.

The protein localises to the nucleus. Its subcellular location is the cytoplasm. Functionally, component of a FANCM-MHF complex that promotes gene conversion at blocked replication forks, probably by reversal of the stalled fork. FANCM-MHF promotes non-crossover recombination. This chain is Inner kinetochore subunit mhf2, found in Schizosaccharomyces pombe (strain 972 / ATCC 24843) (Fission yeast).